A 21-amino-acid chain; its full sequence is AGEDVSHELEEKEKALANHSE.

The disordered stretch occupies residues A1 to E21.

In terms of biological role, morphogenetically active peptide. Active in foot development. The chain is Pedibin from Hydra vulgaris (Hydra).